We begin with the raw amino-acid sequence, 30 residues long: Photosystem I reaction center subunit XII (30 aa).

The chain crosses the membrane as a helical span at residues 7–29; that stretch reads IYTVLCIALLAGILAIRLGSTLY.

Belongs to the PsaM family.

Its subcellular location is the plastid. It is found in the chloroplast thylakoid membrane. The protein is Photosystem I reaction center subunit XII of Phaeodactylum tricornutum (strain CCAP 1055/1).